The sequence spans 244 residues: Neurogenin-1 (244 aa).

Disordered regions lie at residues 1 to 27 (MPAP…SSFL) and 39 to 82 (LAST…ARVR). Residues 10 to 27 (SDLDCSSSNSSSDLSSFL) are compositionally biased toward low complexity. In terms of domain architecture, bHLH spans 93–145 (SRRVKANDRERNRMHNLNAALDALRSVLPSFPDDTKLTKIETLRFAYNYIWAL).

In terms of assembly, efficient DNA binding requires dimerization with another bHLH protein. In terms of tissue distribution, expression restricted to the embryonic nervous system.

It localises to the nucleus. Acts as a transcriptional regulator. Involved in the initiation of neuronal differentiation. Activates transcription by binding to the E box (5'-CANNTG-3'). Associates with chromatin to enhancer regulatory elements in genes encoding key transcriptional regulators of neurogenesis. This chain is Neurogenin-1 (Neurog1), found in Mus musculus (Mouse).